The sequence spans 468 residues: GDNF family receptor alpha-1 (468 aa).

An N-terminal signal peptide occupies residues 1 to 24 (MFLATLYFALPLLDLLMSAEVSGG). 3 repeat units span residues 25 to 113 (DRLD…LQGN), 150 to 238 (KGNN…YEER), and 239 to 342 (ERPN…KNAI). Cys-36 and Cys-42 are joined by a disulfide. Asn-59 carries N-linked (GlcNAc...) asparagine glycosylation. 10 cysteine pairs are disulfide-bonded: Cys-154–Cys-214, Cys-161–Cys-167, Cys-178–Cys-192, Cys-187–Cys-233, Cys-216–Cys-221, Cys-243–Cys-313, Cys-250–Cys-256, Cys-267–Cys-285, Cys-277–Cys-337, and Cys-315–Cys-325. Asn-347 and Asn-406 each carry an N-linked (GlcNAc...) asparagine glycan. Ser-430 carries the GPI-anchor amidated serine lipid modification. Positions 431–468 (HITTKSMAAPPSCSLSSLPVLMLTALAALLSVSLAETS) are cleaved as a propeptide — removed in mature form.

The protein belongs to the GDNFR family. As to quaternary structure, interacts with GDNF ligand and RET: forms a 2:2:2 ternary complex composed of GDNF ligand, GFRA1 and RET receptor. Interacts with SORL1, either alone or in complex with GDNF. Interaction between SORL1 and GFRA1 leads to GFRA1 internalization, but not degradation. As to expression, expressed in liver, brain, kidney and cochlea.

It localises to the cell membrane. It is found in the golgi apparatus. The protein resides in the trans-Golgi network. Its subcellular location is the endosome. The protein localises to the multivesicular body. Functionally, coreceptor for GDNF, a neurotrophic factor that enhances survival and morphological differentiation of dopaminergic neurons and increases their high-affinity dopamine uptake. GDNF-binding leads to autophosphorylation and activation of the RET receptor. This chain is GDNF family receptor alpha-1 (Gfra1), found in Rattus norvegicus (Rat).